The following is a 66-amino-acid chain: Pteroicidin-alpha (66 aa).

A signal peptide spans 1-22 (MKCIALFLVLSMVVLMAEPGEA). At arginine 43 the chain carries Arginine amide; partial. A propeptide spanning residues 44 to 66 (GKNRDMAEQQELERAFDRERAFA) is cleaved from the precursor.

Belongs to the pleurocidin family. This peptide exists in N-terminally amidated and non-amidated forms. The amidated form is more active and has a greater alpha-helix content than the non-amidated form. In terms of tissue distribution, expressed in gill, skin, intestine, spleen, anterior kidney, and blood cells.

It localises to the secreted. The amidated peptide is bactericidal on human pathogens like S.aureus or E.coli, as well as on the fish pathogen A.salmonicida. May also be active against a variety of fungi. It can kill bacteria in less than 30 minutes (S.aureus) and 120 minutes (V.vulnificus). It induces hemolysis of erythrocytes from human and fishes (sea bass and lesser-spotted dogfish). Its function is as follows. The non-amidated peptide only inhibits growth of human pathogens like S.aureus or E.coli, and the fish pathogen A.salmonicida. Induces hemolysis of erythrocytes from human and fishes (sea bass and lesser-spotted dogfish). The protein is Pteroicidin-alpha of Pterois volitans (Red lionfish).